The chain runs to 59 residues: uncharacterized protein (59 aa).

This is an uncharacterized protein from Chenopodium amaranticolor (Quinoa).